We begin with the raw amino-acid sequence, 341 residues long: Phosphate acyltransferase (341 aa).

This sequence belongs to the PlsX family. Homodimer. Probably interacts with PlsY.

It localises to the cytoplasm. It carries out the reaction a fatty acyl-[ACP] + phosphate = an acyl phosphate + holo-[ACP]. The protein operates within lipid metabolism; phospholipid metabolism. Functionally, catalyzes the reversible formation of acyl-phosphate (acyl-PO(4)) from acyl-[acyl-carrier-protein] (acyl-ACP). This enzyme utilizes acyl-ACP as fatty acyl donor, but not acyl-CoA. This chain is Phosphate acyltransferase, found in Vibrio campbellii (strain ATCC BAA-1116).